Consider the following 362-residue polypeptide: UDP-N-acetylglucosamine--N-acetylmuramyl-(pentapeptide) pyrophosphoryl-undecaprenol N-acetylglucosamine transferase (362 aa).

UDP-N-acetyl-alpha-D-glucosamine is bound by residues 15–17 (TGG), Asn127, Arg165, Ser191, Ile247, 266–271 (ALTVSE), and Gln292.

Belongs to the glycosyltransferase 28 family. MurG subfamily.

It localises to the cell inner membrane. It catalyses the reaction di-trans,octa-cis-undecaprenyl diphospho-N-acetyl-alpha-D-muramoyl-L-alanyl-D-glutamyl-meso-2,6-diaminopimeloyl-D-alanyl-D-alanine + UDP-N-acetyl-alpha-D-glucosamine = di-trans,octa-cis-undecaprenyl diphospho-[N-acetyl-alpha-D-glucosaminyl-(1-&gt;4)]-N-acetyl-alpha-D-muramoyl-L-alanyl-D-glutamyl-meso-2,6-diaminopimeloyl-D-alanyl-D-alanine + UDP + H(+). It functions in the pathway cell wall biogenesis; peptidoglycan biosynthesis. Functionally, cell wall formation. Catalyzes the transfer of a GlcNAc subunit on undecaprenyl-pyrophosphoryl-MurNAc-pentapeptide (lipid intermediate I) to form undecaprenyl-pyrophosphoryl-MurNAc-(pentapeptide)GlcNAc (lipid intermediate II). This chain is UDP-N-acetylglucosamine--N-acetylmuramyl-(pentapeptide) pyrophosphoryl-undecaprenol N-acetylglucosamine transferase, found in Shewanella baltica (strain OS155 / ATCC BAA-1091).